Reading from the N-terminus, the 255-residue chain is ATP synthase subunit a 2 (255 aa).

Helical transmembrane passes span 24–44, 86–106, 131–151, 205–225, and 226–246; these read WFGI…VFIL, LIGP…AVDL, DINI…GYTF, MIFI…SVPW, and ALFH…LTVV.

It belongs to the ATPase A chain family. F-type ATPases have 2 components, CF(1) - the catalytic core - and CF(0) - the membrane proton channel. CF(1) has five subunits: alpha(3), beta(3), gamma(1), delta(1), epsilon(1). CF(0) has three main subunits: a(1), b(2) and c(9-12). The alpha and beta chains form an alternating ring which encloses part of the gamma chain. CF(1) is attached to CF(0) by a central stalk formed by the gamma and epsilon chains, while a peripheral stalk is formed by the delta and b chains.

It is found in the cell inner membrane. Its function is as follows. Key component of the proton channel; it plays a direct role in the translocation of protons across the membrane. This chain is ATP synthase subunit a 2, found in Vibrio campbellii (strain ATCC BAA-1116).